The following is a 50-amino-acid chain: uncharacterized protein (50 aa).

This is an uncharacterized protein from Bacillus subtilis (Bacteriophage phi-105).